We begin with the raw amino-acid sequence, 118 residues long: ATP-dependent Clp protease adapter protein ClpS (118 aa).

Residues 1 to 24 form a disordered region; sequence MNGSSNSGSPGGGQTGDDDGTGFD.

Belongs to the ClpS family. As to quaternary structure, binds to the N-terminal domain of the chaperone ClpA.

In terms of biological role, involved in the modulation of the specificity of the ClpAP-mediated ATP-dependent protein degradation. The sequence is that of ATP-dependent Clp protease adapter protein ClpS from Hyphomonas neptunium (strain ATCC 15444).